The sequence spans 315 residues: Lipoyl synthase (315 aa).

7 residues coordinate [4Fe-4S] cluster: Cys62, Cys67, Cys73, Cys88, Cys92, Cys95, and Ser302. One can recognise a Radical SAM core domain in the interval 74–291 (FNHGAATFMI…KKIALKLGFS (218 aa)).

This sequence belongs to the radical SAM superfamily. Lipoyl synthase family. Requires [4Fe-4S] cluster as cofactor.

The protein localises to the cytoplasm. The catalysed reaction is [[Fe-S] cluster scaffold protein carrying a second [4Fe-4S](2+) cluster] + N(6)-octanoyl-L-lysyl-[protein] + 2 oxidized [2Fe-2S]-[ferredoxin] + 2 S-adenosyl-L-methionine + 4 H(+) = [[Fe-S] cluster scaffold protein] + N(6)-[(R)-dihydrolipoyl]-L-lysyl-[protein] + 4 Fe(3+) + 2 hydrogen sulfide + 2 5'-deoxyadenosine + 2 L-methionine + 2 reduced [2Fe-2S]-[ferredoxin]. The protein operates within protein modification; protein lipoylation via endogenous pathway; protein N(6)-(lipoyl)lysine from octanoyl-[acyl-carrier-protein]: step 2/2. In terms of biological role, catalyzes the radical-mediated insertion of two sulfur atoms into the C-6 and C-8 positions of the octanoyl moiety bound to the lipoyl domains of lipoate-dependent enzymes, thereby converting the octanoylated domains into lipoylated derivatives. The protein is Lipoyl synthase of Ruthia magnifica subsp. Calyptogena magnifica.